Reading from the N-terminus, the 100-residue chain is MELTPREKDKLLIFTAALLAERRKARGLKLNYPESVALISAAIMEGARDGKTVAQLMHEGQTILGREDVMEGVPEMIQDIQIEATFPDGTKLVTVHNPIV.

Belongs to the urease gamma subunit family. As to quaternary structure, heterotrimer of UreA (gamma), UreB (beta) and UreC (alpha) subunits. Three heterotrimers associate to form the active enzyme.

Its subcellular location is the cytoplasm. It catalyses the reaction urea + 2 H2O + H(+) = hydrogencarbonate + 2 NH4(+). It functions in the pathway nitrogen metabolism; urea degradation; CO(2) and NH(3) from urea (urease route): step 1/1. The chain is Urease subunit gamma from Polynucleobacter asymbioticus (strain DSM 18221 / CIP 109841 / QLW-P1DMWA-1) (Polynucleobacter necessarius subsp. asymbioticus).